We begin with the raw amino-acid sequence, 420 residues long: UDP-glucuronic acid decarboxylase 1 (420 aa).

Met-1 carries the post-translational modification N-acetylmethionine. Topologically, residues 1–19 (MVSKGLLRLVSSVNRRRMK) are cytoplasmic. Residues 20–40 (LLLGIALFAYAASVWGNFVNM) form a helical; Signal-anchor for type II membrane protein membrane-spanning segment. The Lumenal segment spans residues 41 to 420 (RSIQENGELK…RVKKGRTRHS (380 aa)). Thr-94 carries the post-translational modification Phosphothreonine. Gly-98, Phe-99, Val-100, Asp-119, Asn-120, Phe-122, Thr-123, Gly-124, Asp-144, and Val-145 together coordinate NAD(+). Residues Leu-149 and Tyr-150 each contribute to the UDP-alpha-D-glucuronate site. NAD(+) is bound by residues Leu-159 and Ser-161. Lys-177 serves as a coordination point for UDP-alpha-D-glucuronate. Residue Thr-178 coordinates NAD(+). The UDP-alpha-D-glucuronate site is built by Asn-185, Gly-188, Lys-191, and Arg-192. Positions 200, 231, and 235 each coordinate NAD(+). Tyr-231 functions as the Proton acceptor in the catalytic mechanism. UDP-alpha-D-glucuronate contacts are provided by Tyr-245, Gln-248, and Glu-249. Residues Thr-261, His-267, and Arg-272 each contribute to the NAD(+) site. N-linked (GlcNAc...) asparagine glycosylation is present at Asn-316.

This sequence belongs to the NAD(P)-dependent epimerase/dehydratase family. UDP-glucuronic acid decarboxylase subfamily. As to quaternary structure, homodimer and homotetramer. Interacts with AKT1. It depends on NAD(+) as a cofactor.

It localises to the golgi apparatus. It is found in the golgi stack membrane. It catalyses the reaction UDP-alpha-D-glucuronate + H(+) = UDP-alpha-D-xylose + CO2. It functions in the pathway nucleotide-sugar biosynthesis; UDP-alpha-D-xylose biosynthesis; UDP-alpha-D-xylose from UDP-alpha-D-glucuronate: step 1/1. Functionally, catalyzes the NAD-dependent decarboxylation of UDP-glucuronic acid to UDP-xylose. Necessary for the biosynthesis of the core tetrasaccharide in glycosaminoglycan biosynthesis. The polypeptide is UDP-glucuronic acid decarboxylase 1 (Uxs1) (Mus musculus (Mouse)).